Reading from the N-terminus, the 274-residue chain is Phosphatidylglycerol--prolipoprotein diacylglyceryl transferase (274 aa).

7 consecutive transmembrane segments (helical) span residues 22–42, 61–81, 96–116, 125–145, 177–197, 204–224, and 238–258; these read LSVR…MWLA, LLFY…VLFY, IWTG…AMVW, FFTV…VGRI, SQLY…NLFW, GAIS…VEFV, and ISMG…MIWV. Arginine 144 is a binding site for a 1,2-diacyl-sn-glycero-3-phospho-(1'-sn-glycerol).

Belongs to the Lgt family.

The protein resides in the cell inner membrane. It catalyses the reaction L-cysteinyl-[prolipoprotein] + a 1,2-diacyl-sn-glycero-3-phospho-(1'-sn-glycerol) = an S-1,2-diacyl-sn-glyceryl-L-cysteinyl-[prolipoprotein] + sn-glycerol 1-phosphate + H(+). Its pathway is protein modification; lipoprotein biosynthesis (diacylglyceryl transfer). Its function is as follows. Catalyzes the transfer of the diacylglyceryl group from phosphatidylglycerol to the sulfhydryl group of the N-terminal cysteine of a prolipoprotein, the first step in the formation of mature lipoproteins. The chain is Phosphatidylglycerol--prolipoprotein diacylglyceryl transferase from Aeromonas hydrophila subsp. hydrophila (strain ATCC 7966 / DSM 30187 / BCRC 13018 / CCUG 14551 / JCM 1027 / KCTC 2358 / NCIMB 9240 / NCTC 8049).